We begin with the raw amino-acid sequence, 111 residues long: Class I hydrophobin 2 (111 aa).

Positions 1 to 21 (MFSRVMFCTFLILPLLAAATA) are cleaved as a signal peptide. Intrachain disulfides connect cysteine 30–cysteine 90, cysteine 37–cysteine 84, cysteine 38–cysteine 71, and cysteine 91–cysteine 104.

It belongs to the fungal hydrophobin family. Self-assembles to form functional amyloid fibrils called rodlets. Self-assembly into fibrillar rodlets occurs spontaneously at hydrophobic:hydrophilic interfaces and the rodlets further associate laterally to form amphipathic monolayers. Behavior depends on environmental conditions: (1) when the pH increases or in the presence of Ca(2+) ions, an assembled state, beta-sheet rich, is formed; (2) when the solvent polarity increases, the vhm2 shows an increased tendency to reach hydrophobic/hydrophilic interfaces, with no detectable conformational change; and (3) at high temperature, a reversible conformational change and reversible aggregation occur. The physical and chemical properties, both in solution and as a biofilm, are affected by polysaccharides that act as hydrophilic stabilizer.

Its subcellular location is the secreted. It localises to the cell wall. Its function is as follows. Aerial growth, conidiation, and dispersal of filamentous fungi in the environment rely upon a capability of their secreting small amphipathic proteins called hydrophobins (HPBs) with low sequence identity. Class I can self-assemble into an outermost layer of rodlet bundles on aerial cell surfaces, conferring cellular hydrophobicity that supports fungal growth, development and dispersal; whereas Class II form highly ordered films at water-air interfaces through intermolecular interactions but contribute nothing to the rodlet structure. Vmh2 is a class I hydrophobin involved in biofilm formation and is essential for the maintenance of the surface hydrophobicity of the mycelium. Seems not to be involved in hyphal resistance against environmental stress. This Pleurotus ostreatus (strain PC15) (Oyster mushroom) protein is Class I hydrophobin 2.